The following is a 136-amino-acid chain: Putative covalently bound cell wall protein 22 (136 aa).

The signal sequence occupies residues 1 to 18 (MQFSTVASIAAIAAVASA). 2 N-linked (GlcNAc...) asparagine glycosylation sites follow: Asn21 and Asn82. The disordered stretch occupies residues 73 to 110 (PLPTTEAPKNTTSPAPTEKPTEKPTEKPTQQGSSTQTV). The span at 99–110 (KPTQQGSSTQTV) shows a compositional bias: low complexity. The GPI-anchor amidated glycine moiety is linked to residue Gly115. Positions 116 to 136 (AAVKALPAAGALLAGAAALLL) are cleaved as a propeptide — removed in mature form.

This sequence belongs to the PGA59 family. The GPI-anchor is attached to the protein in the endoplasmic reticulum and serves to target the protein to the cell surface. There, the glucosamine-inositol phospholipid moiety is cleaved off and the GPI-modified mannoprotein is covalently attached via its lipidless GPI glycan remnant to the 1,6-beta-glucan of the outer cell wall layer.

The protein localises to the secreted. Its subcellular location is the cell wall. The protein resides in the membrane. Cell wall protein necessary for cell wall integrity. In Saccharomyces cerevisiae (strain ATCC 204508 / S288c) (Baker's yeast), this protein is Putative covalently bound cell wall protein 22 (CCW22).